Here is a 293-residue protein sequence, read N- to C-terminus: Homoserine O-acetyltransferase (293 aa).

C141 acts as the Acyl-thioester intermediate in catalysis. Substrate is bound by residues K162 and S190. H234 acts as the Proton acceptor in catalysis. Residue E236 is part of the active site. A substrate-binding site is contributed by R248.

The protein belongs to the MetA family.

Its subcellular location is the cytoplasm. It carries out the reaction L-homoserine + acetyl-CoA = O-acetyl-L-homoserine + CoA. It functions in the pathway amino-acid biosynthesis; L-methionine biosynthesis via de novo pathway; O-acetyl-L-homoserine from L-homoserine: step 1/1. In terms of biological role, transfers an acetyl group from acetyl-CoA to L-homoserine, forming acetyl-L-homoserine. The sequence is that of Homoserine O-acetyltransferase from Campylobacter jejuni subsp. jejuni serotype O:2 (strain ATCC 700819 / NCTC 11168).